The primary structure comprises 364 residues: UDP-N-acetylglucosamine--N-acetylmuramyl-(pentapeptide) pyrophosphoryl-undecaprenol N-acetylglucosamine transferase 1 (364 aa).

UDP-N-acetyl-alpha-D-glucosamine-binding positions include 10 to 12, asparagine 124, serine 195, isoleucine 250, and glutamine 295; that span reads TGG.

This sequence belongs to the glycosyltransferase 28 family. MurG subfamily.

The protein localises to the cell membrane. It carries out the reaction di-trans,octa-cis-undecaprenyl diphospho-N-acetyl-alpha-D-muramoyl-L-alanyl-D-glutamyl-meso-2,6-diaminopimeloyl-D-alanyl-D-alanine + UDP-N-acetyl-alpha-D-glucosamine = di-trans,octa-cis-undecaprenyl diphospho-[N-acetyl-alpha-D-glucosaminyl-(1-&gt;4)]-N-acetyl-alpha-D-muramoyl-L-alanyl-D-glutamyl-meso-2,6-diaminopimeloyl-D-alanyl-D-alanine + UDP + H(+). It participates in cell wall biogenesis; peptidoglycan biosynthesis. Functionally, cell wall formation. Catalyzes the transfer of a GlcNAc subunit on undecaprenyl-pyrophosphoryl-MurNAc-pentapeptide (lipid intermediate I) to form undecaprenyl-pyrophosphoryl-MurNAc-(pentapeptide)GlcNAc (lipid intermediate II). This Bacillus cereus (strain ATCC 10987 / NRS 248) protein is UDP-N-acetylglucosamine--N-acetylmuramyl-(pentapeptide) pyrophosphoryl-undecaprenol N-acetylglucosamine transferase 1.